We begin with the raw amino-acid sequence, 299 residues long: Formin-like protein 12 (299 aa).

In terms of domain architecture, FH2 spans 1-295 (MASNCEKMLS…LEKRKMNIKQ (295 aa)).

The protein belongs to the formin-like family. Class-II subfamily.

In Arabidopsis thaliana (Mouse-ear cress), this protein is Formin-like protein 12 (FH12).